Here is a 436-residue protein sequence, read N- to C-terminus: Platelet-activating factor acetylhydrolase (436 aa).

Positions 1–21 (MAPPKLHTLFCLSGFLALVHP) are cleaved as a signal peptide. 2 N-linked (GlcNAc...) asparagine glycosylation sites follow: N76 and N200. The active-site Nucleophile is S271. D294 acts as the Charge relay system in catalysis. Residue N324 is glycosylated (N-linked (GlcNAc...) asparagine). H349 functions as the Charge relay system in the catalytic mechanism.

Belongs to the AB hydrolase superfamily. Lipase family. N-glycosylated. Plasma.

The protein localises to the secreted. It localises to the extracellular space. The enzyme catalyses a 1-O-alkyl-2-acetyl-sn-glycero-3-phosphocholine + H2O = a 1-O-alkyl-sn-glycero-3-phosphocholine + acetate + H(+). It carries out the reaction 1-O-decyl-2-acetyl-sn-glycero-3-phosphocholine + H2O = 1-O-decyl-sn-glycero-3-phosphocholine + acetate + H(+). It catalyses the reaction 1-O-dodecyl-2-acetyl-sn-glycero-3-phosphocholine + H2O = 1-O-dodecyl-sn-glycero-3-phosphocholine + acetate + H(+). The catalysed reaction is 1-O-tetradecyl-2-acetyl-sn-glycero-3-phosphocholine + H2O = 1-O-tetradecyl-sn-glycero-3-phosphocholine + acetate + H(+). The enzyme catalyses 1-O-hexadecyl-2-acetyl-sn-glycero-3-phosphocholine + H2O = 1-O-hexadecyl-sn-glycero-3-phosphocholine + acetate + H(+). It carries out the reaction 1-O-octadecyl-2-acetyl-sn-glycero-3-phosphocholine + H2O = 1-O-octadecyl-sn-glycero-3-phosphocholine + acetate + H(+). It catalyses the reaction 1-hexadecanoyl-2-acetyl-sn-glycero-3-phosphocholine + H2O = 1-hexadecanoyl-sn-glycero-3-phosphocholine + acetate + H(+). The catalysed reaction is 1-hexadecanoyl-2-propionyl-sn-glycero-3-phosphocholine + H2O = propanoate + 1-hexadecanoyl-sn-glycero-3-phosphocholine + H(+). The enzyme catalyses 1-hexadecanoyl-2-butanoyl-sn-glycero-3-phosphocholine + H2O = butanoate + 1-hexadecanoyl-sn-glycero-3-phosphocholine + H(+). It carries out the reaction 1-hexadecanoyl-2-pentanoyl-sn-glycero-3-phosphocholine + H2O = pentanoate + 1-hexadecanoyl-sn-glycero-3-phosphocholine + H(+). It catalyses the reaction 1-hexadecanoyl-2-glutaroyl-sn-glycero-3-phosphocholine + H2O = glutarate + 1-hexadecanoyl-sn-glycero-3-phosphocholine + H(+). The catalysed reaction is 1-hexadecanoyl-2-(5-oxopentanoyl)-sn-glycero-3-phosphocholine + H2O = 5-oxopentanoate + 1-hexadecanoyl-sn-glycero-3-phosphocholine + H(+). The enzyme catalyses 1-hexadecanoyl-2-(9-oxononanoyl)-sn-glycero-3-phosphocholine + H2O = 9-oxononanoate + 1-hexadecanoyl-sn-glycero-3-phosphocholine + H(+). It carries out the reaction 1-hexadecanoyl-2-[9-hydroperoxy-(10E-octadecenoyl)]-sn-glycero-3-phosphocholine + H2O = 9-hydroperoxy-10E-octadecenoate + 1-hexadecanoyl-sn-glycero-3-phosphocholine + H(+). It catalyses the reaction 1-hexadecanoyl-2-(10-hydroperoxy-8E-octadecenoyl)-sn-glycero-3-phosphocholine + H2O = 10-hydroperoxy-(8E)-octadecenoate + 1-hexadecanoyl-sn-glycero-3-phosphocholine + H(+). Functionally, lipoprotein-associated calcium-independent phospholipase A2 involved in phospholipid catabolism during inflammatory and oxidative stress response. At the lipid-aqueous interface, hydrolyzes the ester bond of fatty acyl group attached at sn-2 position of phospholipids (phospholipase A2 activity). Specifically targets phospholipids with a short-chain fatty acyl group at sn-2 position. Can hydrolyze phospholipids with long fatty acyl chains, only if they carry oxidized functional groups. Hydrolyzes and inactivates platelet-activating factor (PAF, 1-O-alkyl-2-acetyl-sn-glycero-3-phosphocholine), a potent pro-inflammatory signaling lipid that acts through PTAFR on various innate immune cells. Hydrolyzes oxidatively truncated phospholipids carrying an aldehyde group at omega position, preventing their accumulation in lipoprotein particles and uncontrolled pro-inflammatory effects. As part of high-density lipoprotein (HDL) particles, can hydrolyze phospholipids having long-chain fatty acyl hydroperoxides at sn-2 position and protect against potential accumulation of these oxylipins in the vascular wall. Catalyzes the release from membrane phospholipids of F2-isoprostanes, lipid biomarkers of cellular oxidative damage. The polypeptide is Platelet-activating factor acetylhydrolase (PLA2G7) (Cavia porcellus (Guinea pig)).